Reading from the N-terminus, the 259-residue chain is GTP cyclohydrolase FolE2 (259 aa).

It belongs to the GTP cyclohydrolase IV family.

It carries out the reaction GTP + H2O = 7,8-dihydroneopterin 3'-triphosphate + formate + H(+). It functions in the pathway cofactor biosynthesis; 7,8-dihydroneopterin triphosphate biosynthesis; 7,8-dihydroneopterin triphosphate from GTP: step 1/1. Its function is as follows. Converts GTP to 7,8-dihydroneopterin triphosphate. In Thermosipho africanus (strain TCF52B), this protein is GTP cyclohydrolase FolE2.